The following is a 301-amino-acid chain: MSQDSVKSLQSTFKTVGVVGRPRNDSTLQMHKNIFHWLCEQGYQVLVENEIGKALNLSENHLASLDQIGQHAQLAIVIGGDGNMLSHARILCKYNTPLIGINRGNLGFLTDIDPKNAYAQLEACLNGEFFVEERFLLEAVVKRHGETVARGNAINELVIHPAKIAHMIDFHVYIDDKFAFSQRSDGLIVATPTGSTAYSLSAGGPILTPQLNAIALVPMFPHTLSSRPLVVDGNSKISVNFAEYNIPQLEISCDSQLALDICCNDVVHIQKSPYKLRLLHLHNYNYYNVLSSKLGWLKKLF.

D81 (proton acceptor) is an active-site residue. NAD(+) contacts are provided by residues 81–82 (DG), 155–156 (NE), H166, R183, D185, 196–201 (TAYSLS), and Q256.

Belongs to the NAD kinase family. A divalent metal cation serves as cofactor.

Its subcellular location is the cytoplasm. The catalysed reaction is NAD(+) + ATP = ADP + NADP(+) + H(+). Involved in the regulation of the intracellular balance of NAD and NADP, and is a key enzyme in the biosynthesis of NADP. Catalyzes specifically the phosphorylation on 2'-hydroxyl of the adenosine moiety of NAD to yield NADP. This is NAD kinase from Mannheimia succiniciproducens (strain KCTC 0769BP / MBEL55E).